The following is an 860-amino-acid chain: Leucine--tRNA ligase (860 aa).

The 'HIGH' region signature appears at 42–52 (PYPSGRLHMGH). The 'KMSKS' region motif lies at 619–623 (KMSKS). Lys-622 is an ATP binding site.

This sequence belongs to the class-I aminoacyl-tRNA synthetase family.

Its subcellular location is the cytoplasm. It carries out the reaction tRNA(Leu) + L-leucine + ATP = L-leucyl-tRNA(Leu) + AMP + diphosphate. This chain is Leucine--tRNA ligase, found in Sodalis glossinidius (strain morsitans).